The primary structure comprises 321 residues: Homoserine O-acetyltransferase (321 aa).

Catalysis depends on C142, which acts as the Acyl-thioester intermediate. Substrate is bound by residues K163 and S192. H235 functions as the Proton acceptor in the catalytic mechanism. E237 is an active-site residue. Position 249 (R249) interacts with substrate.

Belongs to the MetA family.

The protein localises to the cytoplasm. It carries out the reaction L-homoserine + acetyl-CoA = O-acetyl-L-homoserine + CoA. It participates in amino-acid biosynthesis; L-methionine biosynthesis via de novo pathway; O-acetyl-L-homoserine from L-homoserine: step 1/1. Functionally, transfers an acetyl group from acetyl-CoA to L-homoserine, forming acetyl-L-homoserine. The sequence is that of Homoserine O-acetyltransferase from Lactococcus lactis subsp. lactis (strain IL1403) (Streptococcus lactis).